The chain runs to 340 residues: ATPase GET3 (340 aa).

35-42 (KGGVGKTT) serves as a coordination point for ATP. The active site involves Asp-64. ATP contacts are provided by Glu-245 and Asn-272. Residues Cys-283 and Cys-286 each coordinate Zn(2+).

The protein belongs to the arsA ATPase family. As to quaternary structure, homodimer.

Its subcellular location is the cytoplasm. The protein resides in the endoplasmic reticulum. Its function is as follows. ATPase required for the post-translational delivery of tail-anchored (TA) proteins to the endoplasmic reticulum. Recognizes and selectively binds the transmembrane domain of TA proteins in the cytosol. This complex then targets to the endoplasmic reticulum by membrane-bound receptors, where the tail-anchored protein is released for insertion. This process is regulated by ATP binding and hydrolysis. ATP binding drives the homodimer towards the closed dimer state, facilitating recognition of newly synthesized TA membrane proteins. ATP hydrolysis is required for insertion. Subsequently, the homodimer reverts towards the open dimer state, lowering its affinity for the membrane-bound receptor, and returning it to the cytosol to initiate a new round of targeting. This is ATPase GET3 from Chaetomium globosum (strain ATCC 6205 / CBS 148.51 / DSM 1962 / NBRC 6347 / NRRL 1970) (Soil fungus).